A 499-amino-acid polypeptide reads, in one-letter code: MISFTVFVFLTLLFTLSLVKQLRKPTAEKRRLLPPGPRKLPFIGNLHQLGTLPHQSLQYLSNKHGPLMFLQLGSIPTLVVSSAEMAREIFKNHDSVFSGRPSLYAANRLGYGSTVSFAPYGEYWREMRKIMILELLSPKRVQSFEAVRFEEVKLLLQTIALSHGPVNLSELTLSLTNNIVCRIALGKRNRSGADDANKVSEMLKETQAMLGGFFPVDFFPRLGWLNKFSGLENRLEKIFREMDNFYDQVIKEHIADNSSERSGAEHEDVVDVLLRVQKDPNQAIAITDDQIKGVLVDIFVAGTDTASATIIWIMSELIRNPKAMKRAQEEVRDLVTGKEMVEEIDLSKLLYIKSVVKEVLRLHPPAPLLVPREITENCTIKGFEIPAKTRVLVNAKSIAMDPCCWENPNEFLPERFLVSPIDFKGQHFEMLPFGVGRRGCPGVNFAMPVVELALANLLFRFDWELPLGLGIQDLDMEEAIGITIHKKAHLWLKATPFCE.

Residues 2-22 traverse the membrane as a helical segment; the sequence is ISFTVFVFLTLLFTLSLVKQL. Heme is bound at residue cysteine 440.

It belongs to the cytochrome P450 family. Heme serves as cofactor.

Its subcellular location is the membrane. This is Cytochrome P450 71A9 (CYP71A9) from Glycine max (Soybean).